The following is a 296-amino-acid chain: NAD kinase (296 aa).

Aspartate 72 functions as the Proton acceptor in the catalytic mechanism. Residues 72–73 (DG), 146–147 (ND), arginine 157, lysine 174, aspartate 176, 187–192 (TAYALS), and glutamine 247 contribute to the NAD(+) site.

The protein belongs to the NAD kinase family. The cofactor is a divalent metal cation.

Its subcellular location is the cytoplasm. The enzyme catalyses NAD(+) + ATP = ADP + NADP(+) + H(+). Functionally, involved in the regulation of the intracellular balance of NAD and NADP, and is a key enzyme in the biosynthesis of NADP. Catalyzes specifically the phosphorylation on 2'-hydroxyl of the adenosine moiety of NAD to yield NADP. This Pseudomonas entomophila (strain L48) protein is NAD kinase.